The chain runs to 529 residues: Peptide chain release factor 3 (529 aa).

Residues 11–280 form the tr-type G domain; it reads NKRRTFAIIS…GLTEWAPKPQ (270 aa). Residues 20 to 27, 88 to 92, and 142 to 145 each bind GTP; these read SHPDAGKT, DTPGH, and NKLD.

It belongs to the TRAFAC class translation factor GTPase superfamily. Classic translation factor GTPase family. PrfC subfamily.

The protein localises to the cytoplasm. In terms of biological role, increases the formation of ribosomal termination complexes and stimulates activities of RF-1 and RF-2. It binds guanine nucleotides and has strong preference for UGA stop codons. It may interact directly with the ribosome. The stimulation of RF-1 and RF-2 is significantly reduced by GTP and GDP, but not by GMP. The sequence is that of Peptide chain release factor 3 from Mannheimia succiniciproducens (strain KCTC 0769BP / MBEL55E).